The primary structure comprises 175 residues: RNA pyrophosphohydrolase (175 aa).

A Nudix hydrolase domain is found at 6–150; sequence GFRPNVGIVI…KREVYRRVMK (145 aa). The Nudix box motif lies at 38-59; the sequence is GGVDDGETPEQAMYRELYEEIG.

Belongs to the Nudix hydrolase family. RppH subfamily. The cofactor is a divalent metal cation.

Its function is as follows. Accelerates the degradation of transcripts by removing pyrophosphate from the 5'-end of triphosphorylated RNA, leading to a more labile monophosphorylated state that can stimulate subsequent ribonuclease cleavage. In Aeromonas hydrophila subsp. hydrophila (strain ATCC 7966 / DSM 30187 / BCRC 13018 / CCUG 14551 / JCM 1027 / KCTC 2358 / NCIMB 9240 / NCTC 8049), this protein is RNA pyrophosphohydrolase.